The primary structure comprises 905 residues: MPLRLDIKRKLTAMSDRVKSVDLHPTEPWMLASLYNGSVCVWNHETQTLVKTFEVCDLPVRAAKFVARKNWVVTGADDMQIRVFNYNTLERVHMFEAHSDYIRCIAVHPTQPFILTSSDDMLIKLWDWDKKWSCSQVFEGHTHYVMQIVINPKDNNQFASASLDRTIKVWQLGSSSPNFTLEGHEKGVNCIDYYSGGDKPYLISGADDRLVKIWDYQNKTCVQTPEGHAQNVSCATFHPELPIIITGSEDGTVRIWHSSTYRLESTLNYGMERVWCVASLRGSNNVALGYDEGSIIVKLGREEPAMSMDANGKIIWAKHSEVQQANLKAMGDTEIKDGERLPLAVKDMGSCEIYPQTIQHNPNGRFVVVCGDGEYIIYTAMALRNKSFGSAQEFAWAHDSSEYAIRESNSVVKIFKNFKEKKSFKPDFGAESIYGGFLLGVRSVNGLAFYDWENTELIRRIEIQPKHIFWSDSGELVCIATEESFFILKYLSEKVLAAQETHEGVTEDGIEDAFEVLGEIQEIVKTGLWVGDCFIYTSSVNRLNYYVGGEIVTIAHLDRTMYLLGYIPKDNRLYLGDKELNIVSYSLLVSVLEYQTAVMRRDFSMADKVLPTIPKEQRTRVAHFLEKQGFKQQALTVSTDPEHRFELALQLGELKIAYQLAVEAESEQKWKQLAELAISKCQFSLAQECLHHAQDYGGLLLLATASGNASMVNKLAEGAERDGKNNVAFMSYFLQGKLDACLELLIRTGRLPEAAFLARTYLPSQVSRVVKLWRENLSKVNQKAAESLADPTEYENLFPGLKEAFVVEEWVKETHADLWPAKQYPLVTPNEERNVMEEAKRFQPSRATAQQEPDGKPASSPVIMASQTTHKEEKSFQELEDDLDTMELEDIDTTDINLDEDILDD.

WD repeat units follow at residues 13–52, 55–94, 97–136, 140–180, 183–224, 227–266, 350–388, and 390–425; these read AMSD…LVKT, VCDL…RVHM, AHSD…SCSQ, GHTH…PNFT, GHEK…CVQT, GHAQ…LEST, SCEI…NKSF, and SAQE…KSFK. The residue at position 627 (Lys-627) is an N6-acetyllysine. The stretch at 746 to 783 is one WD 9 repeat; it reads IRTGRLPEAAFLARTYLPSQVSRVVKLWRENLSKVNQK. Positions 837–905 are disordered; the sequence is EEAKRFQPSR…INLDEDILDD (69 aa). Phosphoserine is present on Ser-859. Residues 867–891 are a coiled coil; sequence QTTHKEEKSFQELEDDLDTMELEDI. Over residues 878-905 the composition is skewed to acidic residues; it reads ELEDDLDTMELEDIDTTDINLDEDILDD.

It belongs to the WD repeat COPB2 family. Oligomeric complex that consists of at least the alpha, beta, beta', gamma, delta, epsilon and zeta subunits. Probably interacts with PEX11A. Interacts with JAGN1. Interacts with SCYL1.

It localises to the cytoplasm. The protein resides in the cytosol. It is found in the golgi apparatus membrane. Its subcellular location is the cytoplasmic vesicle. The protein localises to the COPI-coated vesicle membrane. In terms of biological role, the coatomer is a cytosolic protein complex that binds to dilysine motifs and reversibly associates with Golgi non-clathrin-coated vesicles, which further mediate biosynthetic protein transport from the ER, via the Golgi up to the trans Golgi network. Coatomer complex is required for budding from Golgi membranes, and is essential for the retrograde Golgi-to-ER transport of dilysine-tagged proteins. In mammals, the coatomer can only be recruited by membranes associated to ADP-ribosylation factors (ARFs), which are small GTP-binding proteins; the complex also influences the Golgi structural integrity, as well as the processing, activity, and endocytic recycling of LDL receptors. This coatomer complex protein, essential for Golgi budding and vesicular trafficking, is a selective binding protein (RACK) for protein kinase C, epsilon type. It binds to Golgi membranes in a GTP-dependent manner. This chain is Coatomer subunit beta' (Copb2), found in Rattus norvegicus (Rat).